We begin with the raw amino-acid sequence, 365 residues long: Serine/threonine-protein kinase SAPK6 (365 aa).

One can recognise a Protein kinase domain in the interval 4-260 (YELLKDIGSG…IREIRNHPWF (257 aa)). ATP contacts are provided by residues 10–18 (IGSGNFGVA) and Lys33. Catalysis depends on Asp123, which acts as the Proton acceptor. A disordered region spans residues 298 to 365 (VQEAKTPPPS…AHASCDLQKS (68 aa)). Residues 317–347 (TEEEEQEDGKNPDDDEGDRDEEEGEEGDSED) are compositionally biased toward acidic residues.

The protein belongs to the protein kinase superfamily. Ser/Thr protein kinase family. In terms of assembly, interacts with BZIP46. May be phosphorylated. In terms of tissue distribution, expressed in leaf blades and leaf sheaths. Expressed in shoots and roots of young seedlings.

The enzyme catalyses L-seryl-[protein] + ATP = O-phospho-L-seryl-[protein] + ADP + H(+). The catalysed reaction is L-threonyl-[protein] + ATP = O-phospho-L-threonyl-[protein] + ADP + H(+). Activated by hyperosmotic stress. May play a role in signal transduction of hyperosmotic response. Can phosphorylate ABI5 in vitro. Can phosphorylate BZIP46 in vitro. This is Serine/threonine-protein kinase SAPK6 from Oryza sativa subsp. japonica (Rice).